The following is an 81-amino-acid chain: Large ribosomal subunit protein uL24 (81 aa).

The protein belongs to the universal ribosomal protein uL24 family. Part of the 50S ribosomal subunit.

One of two assembly initiator proteins, it binds directly to the 5'-end of the 23S rRNA, where it nucleates assembly of the 50S subunit. Its function is as follows. One of the proteins that surrounds the polypeptide exit tunnel on the outside of the subunit. This Chloroherpeton thalassium (strain ATCC 35110 / GB-78) protein is Large ribosomal subunit protein uL24.